Here is a 121-residue protein sequence, read N- to C-terminus: LOB domain-containing protein 24 (121 aa).

An LOB domain is found at 4–105; that stretch reads KRCAACKYLR…NELAKTQAEI (102 aa).

This sequence belongs to the LOB domain-containing protein family.

This is LOB domain-containing protein 24 (LBD24) from Arabidopsis thaliana (Mouse-ear cress).